The following is a 208-amino-acid chain: Heart- and neural crest derivatives-expressed protein 2 (208 aa).

Disordered regions lie at residues Ala-79–Ile-106 and Glu-161–Trp-197. Positions Thr-88–Thr-103 are enriched in basic residues. One can recognise a bHLH domain in the interval Lys-90 to Leu-142. Residues Glu-161–Asp-178 show a composition bias toward basic and acidic residues.

In terms of assembly, efficient DNA binding requires dimerization with another bHLH protein.

It localises to the nucleus. Essential for myocardial and pectoral fin differentiation, patterning and morphogenesis. This is Heart- and neural crest derivatives-expressed protein 2 (hand2) from Danio rerio (Zebrafish).